A 1042-amino-acid polypeptide reads, in one-letter code: Ubiquitin carboxyl-terminal hydrolase 38 (1042 aa).

Residues 445–949 form the USP domain; that stretch reads TGLINLGNTC…TAYVLLYKKQ (505 aa). Catalysis depends on cysteine 454, which acts as the Nucleophile. Histidine 857 acts as the Proton acceptor in catalysis.

The protein belongs to the peptidase C19 family. Interacts with isoform 1 of FBXW7; this interaction prevents FBXW7-mediated degradation of MYC.

Its subcellular location is the cytoplasm. The protein resides in the nucleus. The catalysed reaction is Thiol-dependent hydrolysis of ester, thioester, amide, peptide and isopeptide bonds formed by the C-terminal Gly of ubiquitin (a 76-residue protein attached to proteins as an intracellular targeting signal).. Deubiquitinating enzyme that plays a role in various cellular processes, including DNA repair, cell cycle regulation, and immune response. Plays a role in the inhibition of type I interferon signaling by mediating the 'Lys-33' to 'Lys-48' ubiquitination transition of TBK1 leading to its degradation. Cleaves the ubiquitin chain from the histone demethylase LSD1/KDM1A and prevents it from degradation by the 26S proteasome, thus maintaining LSD1 protein level in cells. Plays a role in the DNA damage response by regulating the deacetylase activity of HDAC1. Mechanistically, removes the 'Lys-63'-linked ubiquitin chain promoting the deacetylase activity of HDAC1 in response to DNA damage. Also acts as a specific deubiquitinase of histone deacetylase 3/HDAC3 and cleaves its 'Lys-63'-linked ubiquitin chains to lower its histone deacetylase activity. Regulates MYC levels and cell proliferation via antagonizing ubiquitin E3 ligase FBXW7 thereby preventing MYC 'Lys-48'-linked ubiquitination and degradation. Participates in antiviral response by removing both 'Lys-48'-linked and 'Lys-63'-linked polyubiquitination of Zika virus envelope protein E. Constitutively associated with IL-33R/IL1RL1, deconjugates its 'Lys-27'-linked polyubiquitination resulting in its autophagic degradation. This chain is Ubiquitin carboxyl-terminal hydrolase 38 (Usp38), found in Mus musculus (Mouse).